The following is a 128-amino-acid chain: 3-aminoacrylate deaminase RutC (128 aa).

The protein belongs to the RutC family. In terms of assembly, homotrimer.

It carries out the reaction (Z)-3-aminoacrylate + H2O + H(+) = 3-oxopropanoate + NH4(+). In terms of biological role, involved in pyrimidine catabolism. Catalyzes the deamination of 3-aminoacrylate to malonic semialdehyde, a reaction that can also occur spontaneously. RutC may facilitate the reaction and modulate the metabolic fitness, rather than catalyzing essential functions. This chain is 3-aminoacrylate deaminase RutC, found in Escherichia coli O111:H- (strain 11128 / EHEC).